The primary structure comprises 407 residues: Large ribosomal subunit protein uL3-like (407 aa).

Basic residues predominate over residues 1–31 (MSHRKFSAPRHGHLGFLPHKRSRRHRGKVKS). A disordered region spans residues 1-37 (MSHRKFSAPRHGHLGFLPHKRSRRHRGKVKSWPRDDP).

It belongs to the universal ribosomal protein uL3 family. As to quaternary structure, component of the large ribosomal subunit (LSU). Part of a LSU subcomplex, the 5S RNP which is composed of the 5S RNA, RPL5 and RPL11. Interacts with NVL in an ATP-dependent manner. Interacts with RRP1B. Interacts with IPO5, IPO7 and KPNB1; these interactions may be involved in RPL5 nuclear import for the assembly of ribosomal subunits. Interacts with RRP1B. As to expression, expression is restricted to striated muscles.

In terms of biological role, heart- and skeletal muscle-specific component of the ribosome, which regulates muscle function. Component of the large ribosomal subunit in striated muscle cells: replaces the RPL3 paralog in the ribosome in these cells. The ribosome is a large ribonucleoprotein complex responsible for the synthesis of proteins in the cell. Inhibits myotube growth and muscle function. This chain is Large ribosomal subunit protein uL3-like, found in Mus musculus (Mouse).